The chain runs to 176 residues: Large ribosomal subunit protein uL6 (176 aa).

Residues Tyr-156–Arg-170 are compositionally biased toward basic and acidic residues. A disordered region spans residues Tyr-156–Lys-176.

The protein belongs to the universal ribosomal protein uL6 family. As to quaternary structure, part of the 50S ribosomal subunit.

This protein binds to the 23S rRNA, and is important in its secondary structure. It is located near the subunit interface in the base of the L7/L12 stalk, and near the tRNA binding site of the peptidyltransferase center. In Shewanella woodyi (strain ATCC 51908 / MS32), this protein is Large ribosomal subunit protein uL6.